A 627-amino-acid polypeptide reads, in one-letter code: (+)-sabinene synthase, chloroplastic (627 aa).

Residues 1–46 (MSVISIVPLASNSCLYKSLMSSTHELKALCRPIATLGMCRRGKSVM) constitute a chloroplast transit peptide. Mg(2+)-binding residues include Asp378, Asp382, and Asp530. The short motif at 378–382 (DDIYD) is the DDXXD motif element.

The protein belongs to the terpene synthase family. Tpsd subfamily. In terms of assembly, monomer. The cofactor is Mg(2+).

The protein localises to the plastid. It is found in the chloroplast. The enzyme catalyses (2E)-geranyl diphosphate = (1R,5R)-sabinene + diphosphate. It functions in the pathway terpene metabolism; oleoresin biosynthesis. Its function is as follows. Terpene synthase (TPS) involved in defensive oleoresin formation in conifers in response to insect attack (e.g. white pine weevil P.strobi) or other injury. Produces (+)-sabinene from geranyl diphosphate, but has no activity with geranylgeranyl diphosphate or farnesyl diphosphate. The polypeptide is (+)-sabinene synthase, chloroplastic (TPS-sab) (Picea sitchensis (Sitka spruce)).